Consider the following 176-residue polypeptide: Vitamin K epoxide reductase complex subunit 1-like protein 1 (176 aa).

Residues 1–13 (MAAPVLLRVSVPR) lie on the Cytoplasmic side of the membrane. Residues 14–36 (WERVARYAVCAAGILLSIYAYHV) form a helical membrane-spanning segment. The Lumenal segment spans residues 37-87 (EREKERDPEHRALCDLGPWVKCSAALASRWGRGFGLLGSIFGKDGVLNQPN). Cysteine 50 and cysteine 58 are oxidised to a cystine. Asparagine 87 contributes to the (S)-warfarin binding site. A helical membrane pass occupies residues 88–102 (SVFGLIFYILQLLLG). The Cytoplasmic portion of the chain corresponds to 103–107 (MTASA). Residues 108–135 (VAALVLMTSSIVSVVGSLYLAYILYFVL) traverse the membrane as a helical segment. The Lumenal portion of the chain corresponds to 136–138 (KEF). A disulfide bridge links cysteine 139 with cysteine 142. A helical membrane pass occupies residues 139 to 160 (CIICVTTYVLNFLLLIINYKRL). Phylloquinone-binding residues include cysteine 142 and tyrosine 146. Tyrosine 146 provides a ligand contact to (S)-warfarin. Topologically, residues 161–176 (VYLNEAWKRQLQPKED) are cytoplasmic.

Belongs to the VKOR family. In terms of tissue distribution, detected in testis and lung.

The protein resides in the endoplasmic reticulum membrane. It carries out the reaction phylloquinone + [protein]-disulfide + H2O = 2,3-epoxyphylloquinone + [protein]-dithiol. The enzyme catalyses phylloquinol + [protein]-disulfide = phylloquinone + [protein]-dithiol. Its activity is regulated as follows. Inhibited by warfarin (coumadin). Warfarin locks VKORC1 in both redox states into the closed conformation. Functionally, involved in vitamin K metabolism. Can reduce inactive vitamin K 2,3-epoxide to active vitamin K, and may contribute to vitamin K-mediated protection against oxidative stress. Plays a role in vitamin K-dependent gamma-carboxylation of Glu residues in target proteins. This Mus musculus (Mouse) protein is Vitamin K epoxide reductase complex subunit 1-like protein 1 (Vkorc1l1).